A 1117-amino-acid polypeptide reads, in one-letter code: Rhoptry apical surface protein 3 (1117 aa).

The span at 1 to 12 (MENRPRQQTSGH) shows a compositional bias: polar residues. 8 disordered regions span residues 1–27 (MENR…SRPG), 47–243 (NHER…SHFT), 258–301 (DSER…NKGI), 325–398 (SDFK…SLST), 415–442 (WNHA…FLAA), 490–572 (AEAV…ESEL), 600–619 (RPLL…ELRS), and 654–736 (QDGT…RLQG). Basic and acidic residues-rich tracts occupy residues 83 to 100 (DSNH…DSQK), 197 to 209 (TPLR…RHVS), and 275 to 300 (MKPK…DNKG). 2 stretches are compositionally biased toward low complexity: residues 418–442 (ASPG…FLAA) and 490–508 (AEAV…GDSS). Positions 510-520 (ESDHSGRERSR) are enriched in basic and acidic residues. A compositionally biased stretch (polar residues) spans 530 to 540 (NEITTMRSQRS). Residues 546-555 (FSREPERESD) show a composition bias toward basic and acidic residues. The span at 557 to 569 (GEMTPTGETSGSE) shows a compositional bias: polar residues. The span at 724–734 (DADRKQEEKRL) shows a compositional bias: basic and acidic residues. Residues 752-788 (MLSVDRRLRKLHSDTAVRRMGETEFWKLYFYQVFLLM) form the BSD domain. Residues 829–838 (QTSGFTESDT) show a composition bias toward polar residues. 5 disordered regions span residues 829–848 (QTSG…YGFA), 858–891 (IIPP…APEQ), 909–964 (RSPS…GDSP), 1031–1066 (SSSQ…PSHL), and 1095–1117 (GTCG…GARA). Residues 839 to 848 (SSPSPSYGFA) are compositionally biased toward low complexity. A compositionally biased stretch (low complexity) spans 909-931 (RSPSLSSSSSGTTSVSARGTGSS). Residues 1031–1044 (SSSQVNGRVSTSRG) show a composition bias toward polar residues. Composition is skewed to basic and acidic residues over residues 1046 to 1062 (MGED…RLEG) and 1108 to 1117 (KGKEVQGARA).

As to quaternary structure, interacts with RASP2.

It is found in the cytoplasmic vesicle. The protein localises to the secretory vesicle. It localises to the rhoptry membrane. This is Rhoptry apical surface protein 3 from Toxoplasma gondii (strain ATCC 50853 / GT1).